A 130-amino-acid polypeptide reads, in one-letter code: Small ribosomal subunit protein uS8 (130 aa).

Belongs to the universal ribosomal protein uS8 family. In terms of assembly, part of the 30S ribosomal subunit.

In terms of biological role, one of the primary rRNA binding proteins, it binds directly to 16S rRNA central domain where it helps coordinate assembly of the platform of the 30S subunit. In Methanococcus aeolicus (strain ATCC BAA-1280 / DSM 17508 / OCM 812 / Nankai-3), this protein is Small ribosomal subunit protein uS8.